A 351-amino-acid polypeptide reads, in one-letter code: Polyribonucleotide 5'-hydroxyl-kinase TK1956 (351 aa).

34–41 (GGVDSGKS) provides a ligand contact to ATP.

A divalent metal cation serves as cofactor.

It catalyses the reaction a 5'-end dephospho-2'-deoxyribonucleoside-DNA + ATP = a 5'-end 5'-phospho-2'-deoxyribonucleoside-DNA + ADP + H(+). The catalysed reaction is a 5'-end dephospho-ribonucleoside-RNA + ATP = a 5'-end 5'-phospho-ribonucleoside-RNA + ADP + H(+). Its function is as follows. Polynucleotide kinase that can phosphorylate the 5'-hydroxyl groups of both single-stranded RNA (ssRNA) and single-stranded DNA (ssDNA). Exhibits a strong preference for ssRNA. This Thermococcus kodakarensis (strain ATCC BAA-918 / JCM 12380 / KOD1) (Pyrococcus kodakaraensis (strain KOD1)) protein is Polyribonucleotide 5'-hydroxyl-kinase TK1956.